The chain runs to 747 residues: Histone-lysine N-methyltransferase EZH1 (747 aa).

The segment at 188–231 is disordered; that stretch reads DEEEDGHNDPSDGKQDDSKEDLPVTRKRKRHAIEGNKKSSKKQF. Over residues 194-211 the composition is skewed to basic and acidic residues; the sequence is HNDPSDGKQDDSKEDLPV. K327 participates in a covalent cross-link: Glycyl lysine isopeptide (Lys-Gly) (interchain with G-Cter in SUMO2). The tract at residues 368-414 is disordered; sequence VSASCSNASASAMAETKEGDSDRDTGNDWASSSSEANSRCQTPTKQK. The span at 369-381 shows a compositional bias: low complexity; sequence SASCSNASASAMA. Residues 382–393 are compositionally biased toward basic and acidic residues; that stretch reads ETKEGDSDRDTG. Residues 395 to 414 show a composition bias toward polar residues; sequence DWASSSSEANSRCQTPTKQK. A Nuclear localization signal motif is present at residues 491–496; it reads QKKKRK. Residues 504 to 606 enclose the CXC domain; it reads CRKIQLKKDN…CKVVSCKNCS (103 aa). The SET domain maps to 613 to 728; the sequence is KHLLLAPSDV…AGEELFFDYR (116 aa).

It belongs to the class V-like SAM-binding methyltransferase superfamily. Histone-lysine methyltransferase family. EZ subfamily. As to quaternary structure, component of the PRC2/EED-EZH1 complex, which includes EED, EZH1, SUZ12, RBBP4 and AEBP2. The PRC2/EED-EZH1 is less abundant than the PRC2/EED-EZH2 complex, has weak methyltransferase activity and compacts chromatin in the absence of the methyltransferase cofactor S-adenosyl-L-methionine (SAM). Interacts with EZHIP; the interaction blocks EZH1 methyltransferase activity. As to expression, expressed at high levels in kidney, adrenal gland, testis and brain.

Its subcellular location is the nucleus. The catalysed reaction is L-lysyl(27)-[histone H3] + 3 S-adenosyl-L-methionine = N(6),N(6),N(6)-trimethyl-L-lysyl(27)-[histone H3] + 3 S-adenosyl-L-homocysteine + 3 H(+). Its function is as follows. Polycomb group (PcG) protein. Catalytic subunit of the PRC2/EED-EZH1 complex, which methylates 'Lys-27' of histone H3, leading to transcriptional repression of the affected target gene. Able to mono-, di- and trimethylate 'Lys-27' of histone H3 to form H3K27me1, H3K27me2 and H3K27me3, respectively. Required for embryonic stem cell derivation and self-renewal, suggesting that it is involved in safeguarding embryonic stem cell identity. Compared to EZH2-containing complexes, it is less abundant in embryonic stem cells, has weak methyltransferase activity and plays a less critical role in forming H3K27me3, which is required for embryonic stem cell identity and proper differentiation. In Mus musculus (Mouse), this protein is Histone-lysine N-methyltransferase EZH1 (Ezh1).